We begin with the raw amino-acid sequence, 238 residues long: MEKKNINEVIANLSVEQLAGMIDHTFLKPFGTAENIEKLCAEARQYQFAMVAINPAEVETCVKLLEGSGVRVGAAIGFPLGQNTVECKAFETRDAIAKGATEIDTVINVRALQKGQTDIVKKEIEDMVSICKPAGVICKVILETCYLTDEEKETVCRIAKEAGVDFVKTSTGFGTAGANVHDVALMRRVVGPVIGVKAAGGIRDLDTALALIQVGATRIGTSSGIQIVEAYKELKKGL.

Aspartate 104 (proton donor/acceptor) is an active-site residue. Lysine 168 serves as the catalytic Schiff-base intermediate with acetaldehyde. The active-site Proton donor/acceptor is the lysine 197.

Belongs to the DeoC/FbaB aldolase family. DeoC type 1 subfamily.

The protein localises to the cytoplasm. The catalysed reaction is 2-deoxy-D-ribose 5-phosphate = D-glyceraldehyde 3-phosphate + acetaldehyde. The protein operates within carbohydrate degradation; 2-deoxy-D-ribose 1-phosphate degradation; D-glyceraldehyde 3-phosphate and acetaldehyde from 2-deoxy-alpha-D-ribose 1-phosphate: step 2/2. Catalyzes a reversible aldol reaction between acetaldehyde and D-glyceraldehyde 3-phosphate to generate 2-deoxy-D-ribose 5-phosphate. The chain is Deoxyribose-phosphate aldolase from Bacteroides thetaiotaomicron (strain ATCC 29148 / DSM 2079 / JCM 5827 / CCUG 10774 / NCTC 10582 / VPI-5482 / E50).